The chain runs to 302 residues: MCHGKIAPKSSSEFVVTSVGHGVFLQLVILCALLGDGLASVCPLPPEPENGGYICHPRPCKDPLTAGSVIEYLCAEGYMLKGDYKYLTCKNGEWTPAMEVSCHLIEDKETHALGVPALSIVASTASSVALILLLVVLFVLLQPKLKSFHHSRREQGVSGDQVSIMVDGVQVALPSYEEAVYGSSGHCMPPADPRVQIVLSEGSAPSGRNMPREQQLQGQEACSSAGGEDEAPGHSGLCEAWGSQGSETVMVHQATTSSWVAGSGSSRPTHKDTADSENSDIQSLLSLTSEEYTDDIPLLKEA.

Positions 1–39 are cleaved as a signal peptide; sequence MCHGKIAPKSSSEFVVTSVGHGVFLQLVILCALLGDGLA. Residues 40–104 form the Sushi domain; sequence SVCPLPPEPE…TPAMEVSCHL (65 aa). Cystine bridges form between Cys-42–Cys-89 and Cys-74–Cys-102. Residues 120–140 traverse the membrane as a helical segment; sequence IVASTASSVALILLLVVLFVL. Disordered regions lie at residues 202 to 241 and 256 to 302; these read GSAPSGRNMPREQQLQGQEACSSAGGEDEAPGHSGLCEAW and TSSW…LKEA. Composition is skewed to polar residues over residues 212-222, 256-267, and 279-290; these read REQQLQGQEAC, TSSWVAGSGSSR, and SDIQSLLSLTSE.

It localises to the membrane. Functionally, may play a role in growth-suppressive activity and cell death. May be involved in the production of chemokine molecules in umbilical vein endothelial cells (HUVECs) cultured in THP1 monocyte LPS-induced medium. Plays a role in preventing tumor onset. The sequence is that of Sushi domain-containing protein 6 from Mus musculus (Mouse).